Reading from the N-terminus, the 101-residue chain is Urease subunit beta (101 aa).

Belongs to the urease beta subunit family. Heterotrimer of UreA (gamma), UreB (beta) and UreC (alpha) subunits. Three heterotrimers associate to form the active enzyme.

It is found in the cytoplasm. It catalyses the reaction urea + 2 H2O + H(+) = hydrogencarbonate + 2 NH4(+). It functions in the pathway nitrogen metabolism; urea degradation; CO(2) and NH(3) from urea (urease route): step 1/1. The sequence is that of Urease subunit beta from Burkholderia pseudomallei (strain 668).